A 241-amino-acid chain; its full sequence is MGFLPIALPFAELEVGQHLYWQIGNLQLHGQVFMTSWIVIGAILALVVVGTRKMERDPHGVQNLLEFLWDYIRDLARTQIGEKAYRDWMPFIGTLFLFIFVSNWGGSLVPWKLIHLPSGELGAPTADINTTVALALLVSLSYFYAGLSRKGLRYFEYYVHPTPIMIPFKIVEDFTKPLSLSFRLFGNILADELVVAVLVFLVPLFLPVPVMFLGLFTSAIQALIFATLAAYYIGEAVEEHH.

Transmembrane regions (helical) follow at residues glycine 30–glycine 50, phenylalanine 91–tryptophan 111, isoleucine 128–serine 148, leucine 193–leucine 213, and glycine 214–glycine 234.

Belongs to the ATPase A chain family. As to quaternary structure, F-type ATPases have 2 components, CF(1) - the catalytic core - and CF(0) - the membrane proton channel. CF(1) has five subunits: alpha(3), beta(3), gamma(1), delta(1), epsilon(1). CF(0) has four main subunits: a, b, b' and c.

It localises to the cellular thylakoid membrane. In terms of biological role, key component of the proton channel; it plays a direct role in the translocation of protons across the membrane. The chain is ATP synthase subunit a from Prochlorococcus marinus (strain MIT 9313).